We begin with the raw amino-acid sequence, 1125 residues long: Protein efr-3 (1125 aa).

Disordered stretches follow at residues 240 to 261 (RTSN…PNPI), 471 to 493 (RPSR…NGAA), 788 to 819 (TSPP…KDET), and 845 to 1093 (QAGS…LGEK). Residues 242-252 (SNATAQPSETT) show a composition bias toward polar residues. Residues 788–798 (TSPPTSPTTSP) show a composition bias toward low complexity. Over residues 845–854 (QAGSSQTASL) the composition is skewed to polar residues. Over residues 855–877 (NGTNGTHRNTVNNNNRLGVNGVT) the composition is skewed to low complexity. Composition is skewed to polar residues over residues 878-896 (SPNG…TGPN), 975-1011 (LSFN…TQQL), and 1046-1071 (SRTT…TSSK).

The protein belongs to the EFR3 family.

The chain is Protein efr-3 (efr-3) from Neurospora crassa (strain ATCC 24698 / 74-OR23-1A / CBS 708.71 / DSM 1257 / FGSC 987).